A 113-amino-acid chain; its full sequence is MSASVLSVISRFLEEYLSSTPQRLKLLDAYLLYILLTGALQFGYCLLVGTFPFNSFLSGFISCVGSFILAVCLRIQINPQNKADFQGISPERAFADFLFASTILHLVVMNFVG.

Serine 2 carries the N-acetylserine modification. Residues 2–30 (SASVLSVISRFLEEYLSSTPQRLKLLDAY) lie on the Cytoplasmic side of the membrane. The helical transmembrane segment at 31–51 (LLYILLTGALQFGYCLLVGTF) threads the bilayer. Proline 52 is a topological domain (lumenal). Residues 53-73 (FNSFLSGFISCVGSFILAVCL) traverse the membrane as a helical segment. Over 74–92 (RIQINPQNKADFQGISPER) the chain is Cytoplasmic. Residues 93–113 (AFADFLFASTILHLVVMNFVG) form a helical membrane-spanning segment.

The protein belongs to the DAD/OST2 family. In terms of assembly, component of the oligosaccharyltransferase (OST) complex. OST exists in two different complex forms which contain common core subunits RPN1, RPN2, OST48, OST4, DAD1 and TMEM258, either STT3A or STT3B as catalytic subunits, and form-specific accessory subunits. STT3A complex assembly occurs through the formation of 3 subcomplexes. Subcomplex 1 contains RPN1 and TMEM258, subcomplex 2 contains the STT3A-specific subunits STT3A, DC2/OSTC, and KCP2 as well as the core subunit OST4, and subcomplex 3 contains RPN2, DAD1, and OST48. The STT3A complex can form stable complexes with the Sec61 complex or with both the Sec61 and TRAP complexes.

It localises to the endoplasmic reticulum membrane. Its pathway is protein modification; protein glycosylation. In terms of biological role, subunit of the oligosaccharyl transferase (OST) complex that catalyzes the initial transfer of a defined glycan (Glc(3)Man(9)GlcNAc(2) in eukaryotes) from the lipid carrier dolichol-pyrophosphate to an asparagine residue within an Asn-X-Ser/Thr consensus motif in nascent polypeptide chains, the first step in protein N-glycosylation. N-glycosylation occurs cotranslationally and the complex associates with the Sec61 complex at the channel-forming translocon complex that mediates protein translocation across the endoplasmic reticulum (ER). All subunits are required for a maximal enzyme activity. This chain is Dolichyl-diphosphooligosaccharide--protein glycosyltransferase subunit DAD1, found in Sus scrofa (Pig).